Reading from the N-terminus, the 888-residue chain is Prodigiosin synthesizing transferase PigC (888 aa).

It belongs to the PigC family.

It participates in antibiotic biosynthesis; prodigiosin biosynthesis. Functionally, involved in the biosynthesis of 2-methyl-3-n-amyl-pyrrole (MAP), one of the terminal products involved in the biosynthesis of the red antibiotic prodigiosin (Pig). Catalyzes the transfer of 2-methyl-3-n-amyl-pyrrole (MAP) to 4-methoxy-2,2'-bipyrrole-5-carbaldehyde (MBC) to yield prodigiosin. It is able to use substrates with a variety of monocyclic rings in place of the pyrrolic ring A of its natural substrate. This is Prodigiosin synthesizing transferase PigC from Serratia marcescens.